The primary structure comprises 105 residues: Thioredoxin (105 aa).

In terms of domain architecture, Thioredoxin spans 2-105 (VKQIESKYAF…KLEATINELI (104 aa)). N6-acetyllysine is present on Lys-3. Lys-8 is subject to N6-succinyllysine. Residues Cys-32 and Cys-35 each act as nucleophile in the active site. Cys-32 and Cys-35 are joined by a disulfide. Lys-39 is modified (N6-acetyllysine). S-nitrosocysteine occurs at positions 62 and 69. Position 73 is an S-nitrosocysteine; alternate (Cys-73). Lys-94 bears the N6-acetyllysine; alternate mark. Lys-94 is subject to N6-succinyllysine; alternate.

The protein belongs to the thioredoxin family. In terms of assembly, homodimer; disulfide-linked. Interacts with TXNIP through the redox-active site. Interacts with MAP3K5 and CASP3. Interacts with APEX1; the interaction stimulates the FOS/JUN AP-1 DNA-binding activity in a redox-dependent manner. In the fully reduced protein, both Cys-69 and Cys-73 are nitrosylated in response to nitric oxide (NO). When two disulfide bonds are present in the protein, only Cys-73 is nitrosylated. Cys-73 can serve as donor for nitrosylation of target proteins.

It localises to the nucleus. The protein localises to the cytoplasm. It is found in the secreted. Functionally, participates in various redox reactions through the reversible oxidation of its active center dithiol to a disulfide and catalyzes dithiol-disulfide exchange reactions. Plays a role in the reversible S-nitrosylation of cysteine residues in target proteins, and thereby contributes to the response to intracellular nitric oxide. Nitrosylates the active site Cys of CASP3 in response to nitric oxide (NO), and thereby inhibits caspase-3 activity. Induces the FOS/JUN AP-1 DNA binding activity in ionizing radiation (IR) cells through its oxidation/reduction status and stimulates AP-1 transcriptional activity. In Bos taurus (Bovine), this protein is Thioredoxin (TXN).